We begin with the raw amino-acid sequence, 334 residues long: snRNA-activating protein complex subunit 2 (334 aa).

Disordered regions lie at residues 137-200 and 271-306; these read LHSK…STEE and AGGS…ELKS. Over residues 167 to 180 the composition is skewed to low complexity; it reads IPSSAPAAPSSAPR.

In terms of assembly, part of the SNAPc complex composed of 5 subunits: SNAPC1, SNAPC2, SNAPC3, SNAPC4 and SNAPC5. SNAPC2 interacts with TBP and SNAPC4.

Its subcellular location is the nucleus. In terms of biological role, part of the SNAPc complex required for the transcription of both RNA polymerase II and III small-nuclear RNA genes. Binds to the proximal sequence element (PSE), a non-TATA-box basal promoter element common to these 2 types of genes. Recruits TBP and BRF2 to the U6 snRNA TATA box. The sequence is that of snRNA-activating protein complex subunit 2 (SNAPC2) from Homo sapiens (Human).